A 197-amino-acid polypeptide reads, in one-letter code: Protein GrpE (197 aa).

Positions methionine 1–proline 39 are disordered.

The protein belongs to the GrpE family. In terms of assembly, homodimer.

It localises to the cytoplasm. Functionally, participates actively in the response to hyperosmotic and heat shock by preventing the aggregation of stress-denatured proteins, in association with DnaK and GrpE. It is the nucleotide exchange factor for DnaK and may function as a thermosensor. Unfolded proteins bind initially to DnaJ; upon interaction with the DnaJ-bound protein, DnaK hydrolyzes its bound ATP, resulting in the formation of a stable complex. GrpE releases ADP from DnaK; ATP binding to DnaK triggers the release of the substrate protein, thus completing the reaction cycle. Several rounds of ATP-dependent interactions between DnaJ, DnaK and GrpE are required for fully efficient folding. This is Protein GrpE from Escherichia coli O157:H7 (strain EC4115 / EHEC).